A 184-amino-acid chain; its full sequence is dCTP deaminase (184 aa).

DCTP is bound by residues 107 to 112, 131 to 133, Gln152, Tyr166, and Gln176; these read KSTYAR and TLE. Glu133 functions as the Proton donor/acceptor in the catalytic mechanism.

It belongs to the dCTP deaminase family. As to quaternary structure, homotrimer.

The enzyme catalyses dCTP + H2O + H(+) = dUTP + NH4(+). It functions in the pathway pyrimidine metabolism; dUMP biosynthesis; dUMP from dCTP (dUTP route): step 1/2. In terms of biological role, catalyzes the deamination of dCTP to dUTP. The polypeptide is dCTP deaminase (Gemmatimonas aurantiaca (strain DSM 14586 / JCM 11422 / NBRC 100505 / T-27)).